The following is a 131-amino-acid chain: MNLPTAQEVQGLMARYIELVDVGDIEAIVQMYADDATVEDPFGQPPIHGREQIAAFYRQGLGGGKVRACLTGPVRASHNGCGAMPFRVEMVWNGQPCALDVIDVMRFDEHGRIQTMQAYWSEVNLSVREPQ.

The Proton donor role is filled by Tyr-16. Asp-40 functions as the Proton acceptor in the catalytic mechanism. Asp-103 contacts substrate.

In terms of assembly, homodimer.

The catalysed reaction is a 3-oxo-Delta(5)-steroid = a 3-oxo-Delta(4)-steroid. This Pseudomonas putida (Arthrobacter siderocapsulatus) protein is Steroid Delta-isomerase (ksi).